Consider the following 130-residue polypeptide: Flagellar assembly factor FliW (130 aa).

It belongs to the FliW family. Interacts with translational regulator CsrA and flagellin(s).

The protein localises to the cytoplasm. In terms of biological role, acts as an anti-CsrA protein, binds CsrA and prevents it from repressing translation of its target genes, one of which is flagellin. Binds to flagellin and participates in the assembly of the flagellum. The protein is Flagellar assembly factor FliW of Borrelia turicatae (strain 91E135).